Reading from the N-terminus, the 1634-residue chain is Probable serine/threonine-protein kinase DDB_G0282895 (1634 aa).

An MORN 1 repeat occupies 40-63 (YKGNLNENKLKNGKGTFLFPNSIY). Positions 84-131 (QKIQKKSSQSKSQQQPPSQTKKSSSPINLSPRLQGQNPTITTNGSNNN) are disordered. Low complexity predominate over residues 89 to 109 (KSSQSKSQQQPPSQTKKSSSP). Positions 110–119 (INLSPRLQGQ) are enriched in polar residues. The span at 120 to 131 (NPTITTNGSNNN) shows a compositional bias: low complexity. The MORN 2 repeat unit spans residues 169–191 (YNGKWINGKANGIGCFHFSKDDS). Composition is skewed to low complexity over residues 273 to 292 (SNNN…LSPT) and 318 to 339 (SGSG…PISS). Disordered stretches follow at residues 273–367 (SNNN…QQQQ), 658–750 (TTAT…TFSV), and 783–816 (SSIL…NCGQ). Polar residues predominate over residues 340-351 (GLQHSKTQPNVS). Composition is skewed to low complexity over residues 352–367 (QSQN…QQQQ), 658–688 (TTAT…TTTT), and 703–715 (PPSQ…SPSS). Over residues 716-732 (DQTNLPSIAISSSNGIS) the composition is skewed to polar residues. The segment covering 787–813 (NNNNNNNNNNNNNNNNNNNNNNNNNNN) has biased composition (low complexity). The chain crosses the membrane as a helical span at residues 1255 to 1275 (IFIGFMELCVIDELCGFSFIY). A Protein kinase domain is found at 1377–1634 (LQILQFLGEG…IIQKLCNHKC (258 aa)). ATP contacts are provided by residues 1383 to 1391 (LGEGALAEV) and lysine 1404. Aspartate 1500 acts as the Proton acceptor in catalysis.

Belongs to the protein kinase superfamily. TKL Ser/Thr protein kinase family.

The protein resides in the membrane. The enzyme catalyses L-seryl-[protein] + ATP = O-phospho-L-seryl-[protein] + ADP + H(+). It catalyses the reaction L-threonyl-[protein] + ATP = O-phospho-L-threonyl-[protein] + ADP + H(+). The protein is Probable serine/threonine-protein kinase DDB_G0282895 of Dictyostelium discoideum (Social amoeba).